The sequence spans 137 residues: ATP synthase epsilon chain (137 aa).

This sequence belongs to the ATPase epsilon chain family. In terms of assembly, F-type ATPases have 2 components, CF(1) - the catalytic core - and CF(0) - the membrane proton channel. CF(1) has five subunits: alpha(3), beta(3), gamma(1), delta(1), epsilon(1). CF(0) has three main subunits: a, b and c.

The protein resides in the cell membrane. In terms of biological role, produces ATP from ADP in the presence of a proton gradient across the membrane. The sequence is that of ATP synthase epsilon chain from Desulforudis audaxviator (strain MP104C).